A 693-amino-acid chain; its full sequence is FAST kinase domain-containing protein 2, mitochondrial (693 aa).

Phosphoserine is present on residues serine 110 and serine 124. An RAP domain is found at 618-675 (VAVLCVSRSAYCLGSSHPRGFLAMKMRHLNAMGFRVILVNNWEMDKLEMEDAVTFLKT). Serine 692 is modified (phosphoserine).

Belongs to the FAST kinase family. As to quaternary structure, monomer. Found in a complex with GRSF1, DDX28, DHX30 and FASTKD5. Associates with the 16S mitochondrial rRNA (16S mt-rRNA). Forms a regulatory protein-RNA complex, consisting of RCC1L, NGRN, RPUSD3, RPUSD4, TRUB2, FASTKD2 and 16S mt-rRNA.

It is found in the mitochondrion matrix. It localises to the mitochondrion nucleoid. Functionally, plays an important role in assembly of the mitochondrial large ribosomal subunit. As a component of a functional protein-RNA module, consisting of RCC1L, NGRN, RPUSD3, RPUSD4, TRUB2, FASTKD2 and 16S mitochondrial ribosomal RNA (16S mt-rRNA), controls 16S mt-rRNA abundance and is required for intra-mitochondrial translation. May play a role in mitochondrial apoptosis. The sequence is that of FAST kinase domain-containing protein 2, mitochondrial (FASTKD2) from Pongo abelii (Sumatran orangutan).